The sequence spans 1159 residues: Syntaxin-binding protein 5-like (1159 aa).

Residues 1 to 37 (MKKFRKVLDGLTTSSPVNPGGSPGCGSAAGTPSAAPT) are disordered. Over residues 25–37 (CGSAAGTPSAAPT) the composition is skewed to low complexity. WD repeat units lie at residues 67 to 108 (TALA…CHSQ), 115 to 154 (VLQM…SLKF), 159 to 195 (ITFC…GYVI), 214 to 248 (HLSD…DFRI), 254 to 286 (IHSV…TAKP), 307 to 350 (PILK…KAIT), 358 to 392 (IVDF…VVDL), 414 to 491 (TCTA…YKLK), 519 to 628 (QMIS…ELVV), and 642 to 703 (TCLD…STSG). Disordered regions lie at residues 571 to 604 (SDTE…SVRD) and 690 to 770 (LTRS…KAQS). 2 stretches are compositionally biased toward polar residues: residues 699-713 (QSTS…NQVS) and 721-739 (SPTS…SQPC). WD repeat units follow at residues 808 to 865 (VTTL…TGTV), 874 to 946 (RFGF…QACL), 951 to 995 (ITES…LDVS), and 1009 to 1032 (CFTN…TYSQ). The 61-residue stretch at 1094–1154 (GIEGMKAAAG…HELMLKCKDK (61 aa)) folds into the v-SNARE coiled-coil homology domain.

Belongs to the WD repeat L(2)GL family.

It localises to the cytoplasm. Its subcellular location is the cell membrane. The protein localises to the membrane. In terms of biological role, may play a role in vesicle trafficking and exocytosis. The polypeptide is Syntaxin-binding protein 5-like (stxbp5l) (Danio rerio (Zebrafish)).